The chain runs to 163 residues: Late embryogenesis abundant protein Dc3 (163 aa).

2 disordered regions span residues 1-117 and 139-163; these read MASH…GGLM and FGMAGADEEEKTTTTRVTRSSARTE. Composition is skewed to basic and acidic residues over residues 28–56, 67–84, and 91–113; these read TMKDKAQAAKDKASEMAGSARDRTVESKD, GAVKDKTCETAQAAKEKT, and TKEKASEMGESAKETAVAGKEKT. 6 consecutive repeat copies span residues 32 to 42, 43 to 53, 65 to 75, 76 to 86, 87 to 97, and 103 to 115. Positions 32-115 are 6 X 11 AA approximate repeats; sequence KAQAAKDKAS…AVAGKEKTGG (84 aa). The span at 152–163 shows a compositional bias: low complexity; that stretch reads TTRVTRSSARTE.

The protein belongs to the LEA type 4 family.

The chain is Late embryogenesis abundant protein Dc3 from Daucus carota (Wild carrot).